We begin with the raw amino-acid sequence, 344 residues long: Dihydroorotate dehydrogenase (quinone) (344 aa).

FMN is bound by residues 65 to 69 (AGFDK) and threonine 89. Lysine 69 contributes to the substrate binding site. 114–118 (NRMGF) contacts substrate. Asparagine 145 and asparagine 178 together coordinate FMN. Asparagine 178 is a substrate binding site. The Nucleophile role is filled by serine 181. Residue asparagine 183 coordinates substrate. FMN is bound by residues lysine 215 and threonine 243. Residue 244 to 245 (NT) coordinates substrate. Residues glycine 269, glycine 298, and 319-320 (YT) contribute to the FMN site.

The protein belongs to the dihydroorotate dehydrogenase family. Type 2 subfamily. Monomer. FMN serves as cofactor.

The protein localises to the cell membrane. It catalyses the reaction (S)-dihydroorotate + a quinone = orotate + a quinol. The protein operates within pyrimidine metabolism; UMP biosynthesis via de novo pathway; orotate from (S)-dihydroorotate (quinone route): step 1/1. Functionally, catalyzes the conversion of dihydroorotate to orotate with quinone as electron acceptor. The protein is Dihydroorotate dehydrogenase (quinone) of Clavibacter michiganensis subsp. michiganensis (strain NCPPB 382).